A 354-amino-acid polypeptide reads, in one-letter code: NADH-quinone oxidoreductase subunit H (354 aa).

Transmembrane regions (helical) follow at residues 25 to 45 (LVRILVVAVVILLCVAYLILW), 91 to 111 (WLYLIAPVMTVVPAFAVWAVI), 126 to 146 (LLYAMAISSIGVYAVILAGWA), 170 to 190 (MGFALVLVLMTAGSLNLSEIV), 205 to 225 (FLSWNWLPLLPVFVIYFISGI), 253 to 273 (MAFALFFLAEYINMIVISALA), 290 to 310 (FIPGIFWLVLKVFALLSVFIW), and 330 to 350 (VFLPVCVFWVIVVGFWMMSPL).

The protein belongs to the complex I subunit 1 family. As to quaternary structure, NDH-1 is composed of 14 different subunits. Subunits NuoA, H, J, K, L, M, N constitute the membrane sector of the complex.

The protein resides in the cell inner membrane. It carries out the reaction a quinone + NADH + 5 H(+)(in) = a quinol + NAD(+) + 4 H(+)(out). In terms of biological role, NDH-1 shuttles electrons from NADH, via FMN and iron-sulfur (Fe-S) centers, to quinones in the respiratory chain. The immediate electron acceptor for the enzyme in this species is believed to be ubiquinone. Couples the redox reaction to proton translocation (for every two electrons transferred, four hydrogen ions are translocated across the cytoplasmic membrane), and thus conserves the redox energy in a proton gradient. This subunit may bind ubiquinone. This Burkholderia thailandensis (strain ATCC 700388 / DSM 13276 / CCUG 48851 / CIP 106301 / E264) protein is NADH-quinone oxidoreductase subunit H.